We begin with the raw amino-acid sequence, 196 residues long: uncharacterized protein (196 aa).

To E.coli YjaG.

This is an uncharacterized protein from Haemophilus influenzae (strain ATCC 51907 / DSM 11121 / KW20 / Rd).